The chain runs to 348 residues: Structural glycoprotein p40 (348 aa).

Belongs to the baculoviridae gp41 family. O-glycosylated; contains N-acetylglucosamine side chains.

The sequence is that of Structural glycoprotein p40 (P40) from Bombyx mori nuclear polyhedrosis virus (BmNPV).